The sequence spans 508 residues: Argininosuccinate lyase (508 aa).

Belongs to the lyase 1 family. Argininosuccinate lyase subfamily.

Its subcellular location is the cytoplasm. The catalysed reaction is 2-(N(omega)-L-arginino)succinate = fumarate + L-arginine. It participates in amino-acid biosynthesis; L-arginine biosynthesis; L-arginine from L-ornithine and carbamoyl phosphate: step 3/3. In Methanopyrus kandleri (strain AV19 / DSM 6324 / JCM 9639 / NBRC 100938), this protein is Argininosuccinate lyase.